A 99-amino-acid polypeptide reads, in one-letter code: Turripeptide OL71 (99 aa).

In terms of processing, contains 5 disulfide bonds. Expressed by the venom duct.

It is found in the secreted. Functionally, acts as a neurotoxin by inhibiting an ion channel. This is Turripeptide OL71 from Iotyrris olangoensis (Sea snail).